Here is an 808-residue protein sequence, read N- to C-terminus: Auxin response factor 4 (808 aa).

The span at 1 to 13 shows a compositional bias: pro residues; that stretch reads MPPAAMAPPPPPQ. Residues 1-20 are disordered; the sequence is MPPAAMAPPPPPQGSSTGDP. The segment at residues 129-231 is a DNA-binding region (TF-B3); it reads FCKTLTASDT…ELRVGVRRAM (103 aa). Basic and acidic residues predominate over residues 342 to 352; that stretch reads PSTIPRPDRVS. 3 disordered regions span residues 342–433, 661–691, and 778–808; these read PSTI…DSDV, TAGT…VAST, and QKMN…KSDN. The segment covering 402–432 has biased composition (polar residues); the sequence is AQAQRSQNSTVLQGQEQMTLRSNLTESNDSD. The PB1 domain occupies 692–785; it reads RSCTKVHKQG…EVQKMNSKSN (94 aa). Residues 787–799 are compositionally biased toward basic and acidic residues; sequence PRKDDSSENEKGH.

Belongs to the ARF family. Homodimers and heterodimers. As to expression, expressed in roots, culms, leaves and young panicles.

It is found in the nucleus. Auxin response factors (ARFs) are transcriptional factors that bind specifically to the DNA sequence 5'-TGTCTC-3' found in the auxin-responsive promoter elements (AuxREs). In Oryza sativa subsp. japonica (Rice), this protein is Auxin response factor 4 (ARF4).